The primary structure comprises 325 residues: Gamma-hemolysin component B (325 aa).

The N-terminal stretch at 1–26 is a signal peptide; the sequence is MKMNKLVKSSVATSMALLLLSGTANA.

This sequence belongs to the aerolysin family. As to quaternary structure, toxicity requires sequential binding and synergistic association of a class S and a class F component which form heterooligomeric complexes. HlgB (class F) associates with either hlgA thus forming an AB toxin or with hlgC thus forming a CB toxin. Interacts with host AMFR.

The protein resides in the secreted. In terms of biological role, toxin that seems to act by forming pores in the membrane of the cell. Has a hemolytic and a leucotoxic activity. Promotes host AMFR-mediated inflammation by mediating 'Lys-27'-linked ubiquitination of TAB3, TAK1-TAB3 complex formation and phosphorylation of TAK1/MAP3K7. In turn, activates host NF-kappa-B signaling pathway. In Staphylococcus aureus (strain NCTC 8325 / PS 47), this protein is Gamma-hemolysin component B (hlgB).